We begin with the raw amino-acid sequence, 300 residues long: GTPase Era (300 aa).

The Era-type G domain occupies 7–182 (YCGFIAIVGR…LRKGVHHFPE (176 aa)). Residues 15–22 (GRPNVGKS) form a G1 region. 15-22 (GRPNVGKS) is a GTP binding site. Residues 41-45 (QTTRH) form a G2 region. Residues 62-65 (DTPG) form a G3 region. Residues 62–66 (DTPGL) and 124–127 (NKVD) each bind GTP. Residues 124 to 127 (NKVD) are G4. Residues 154-156 (ISA) are G5. Residues 206–283 (TGEELPYSVT…HLELWVKVKS (78 aa)) form the KH type-2 domain.

Belongs to the TRAFAC class TrmE-Era-EngA-EngB-Septin-like GTPase superfamily. Era GTPase family. Monomer.

The protein resides in the cytoplasm. The protein localises to the cell inner membrane. In terms of biological role, an essential GTPase that binds both GDP and GTP, with rapid nucleotide exchange. Plays a role in 16S rRNA processing and 30S ribosomal subunit biogenesis and possibly also in cell cycle regulation and energy metabolism. The chain is GTPase Era from Histophilus somni (strain 129Pt) (Haemophilus somnus).